The sequence spans 196 residues: FMN-dependent NADH:quinone oxidoreductase (196 aa).

Residues serine 10, 16–18, 93–96, and 137–140 contribute to the FMN site; these read SQS, MYNF, and TRGG.

The protein belongs to the azoreductase type 1 family. Homodimer. FMN is required as a cofactor.

The enzyme catalyses 2 a quinone + NADH + H(+) = 2 a 1,4-benzosemiquinone + NAD(+). It catalyses the reaction N,N-dimethyl-1,4-phenylenediamine + anthranilate + 2 NAD(+) = 2-(4-dimethylaminophenyl)diazenylbenzoate + 2 NADH + 2 H(+). In terms of biological role, quinone reductase that provides resistance to thiol-specific stress caused by electrophilic quinones. Functionally, also exhibits azoreductase activity. Catalyzes the reductive cleavage of the azo bond in aromatic azo compounds to the corresponding amines. The chain is FMN-dependent NADH:quinone oxidoreductase from Shewanella amazonensis (strain ATCC BAA-1098 / SB2B).